Reading from the N-terminus, the 201-residue chain is Small ribosomal subunit protein uS4c (201 aa).

Residues 1–14 (MSRYRGPRFKKIRR) show a composition bias toward basic residues. The interval 1-44 (MSRYRGPRFKKIRRLGALPGLTSKRPRAGSDPRNQSRSGKKSQY) is disordered. The region spanning 89–152 (MRLDNTLFRL…NSRTLVQNLL (64 aa)) is the S4 RNA-binding domain.

It belongs to the universal ribosomal protein uS4 family. Part of the 30S ribosomal subunit. Contacts protein S5. The interaction surface between S4 and S5 is involved in control of translational fidelity.

The protein resides in the plastid. The protein localises to the chloroplast. One of the primary rRNA binding proteins, it binds directly to 16S rRNA where it nucleates assembly of the body of the 30S subunit. Its function is as follows. With S5 and S12 plays an important role in translational accuracy. The sequence is that of Small ribosomal subunit protein uS4c (rps4) from Draba nemorosa (Woodland whitlowgrass).